Reading from the N-terminus, the 155-residue chain is Arginine repressor (155 aa).

The protein belongs to the ArgR family.

It is found in the cytoplasm. It functions in the pathway amino-acid biosynthesis; L-arginine biosynthesis [regulation]. Its function is as follows. Regulates arginine biosynthesis genes. The polypeptide is Arginine repressor (Histophilus somni (strain 129Pt) (Haemophilus somnus)).